A 111-amino-acid chain; its full sequence is Cytochrome c (111 aa).

Residue Ala1 is modified to N-acetylalanine. Cys22, Cys25, and His26 together coordinate heme c. At Lys80 the chain carries N6,N6,N6-trimethyllysine. A heme c-binding site is contributed by Met88. At Lys94 the chain carries N6,N6,N6-trimethyllysine.

The protein belongs to the cytochrome c family. In terms of processing, binds 1 heme c group covalently per subunit.

It localises to the mitochondrion intermembrane space. Its function is as follows. Electron carrier protein. The oxidized form of the cytochrome c heme group can accept an electron from the heme group of the cytochrome c1 subunit of cytochrome reductase. Cytochrome c then transfers this electron to the cytochrome oxidase complex, the final protein carrier in the mitochondrial electron-transport chain. This chain is Cytochrome c, found in Nigella damascena (Love-in-a-mist).